The primary structure comprises 211 residues: High mobility group protein B1-like 1 (211 aa).

N6-acetyllysine occurs at positions 3, 7, 8, 12, 28, 29, and 30. The HMG box 1 DNA-binding region spans 9–79; it reads PRGKMSSYAF…HYERQMKTYI (71 aa). Residues 71–96 form a disordered region; that stretch reads YERQMKTYIPPKGETKKKFKDPNAPK. Over residues 83-94 the composition is skewed to basic and acidic residues; sequence GETKKKFKDPNA. The HMG box 2 DNA-binding region spans 95 to 163; sequence PKRPPSAFFL…KYEKDIAAYQ (69 aa). N6-acetyllysine occurs at positions 127, 128, 172, 173, 177, 180, 182, 183, 184, and 185. The disordered stretch occupies residues 161–211; that stretch reads AYQAKGKPEAAKKGVVKAEKSKKKKEEEEDEEDEEDEEEEDEEDEEDDDDE. Residues 166 to 179 show a composition bias toward basic and acidic residues; it reads GKPEAAKKGVVKAE. A compositionally biased stretch (acidic residues) spans 187–211; that stretch reads EEEDEEDEEDEEEEDEEDEEDDDDE.

It belongs to the HMGB family.

It localises to the nucleus. Its subcellular location is the chromosome. In terms of biological role, binds preferentially single-stranded DNA and unwinds double-stranded DNA. The protein is High mobility group protein B1-like 1 (HMGB1P1) of Homo sapiens (Human).